Reading from the N-terminus, the 367-residue chain is Outer membrane porin C (367 aa).

A signal peptide spans 1-21 (MKVKVLSLLVPALLVAGAANA).

The protein belongs to the Gram-negative porin family. As to quaternary structure, homotrimer.

The protein resides in the cell outer membrane. Functionally, forms pores that allow passive diffusion of small molecules across the outer membrane. In Escherichia coli O157:H7, this protein is Outer membrane porin C (ompC).